A 358-amino-acid polypeptide reads, in one-letter code: tRNA-specific 2-thiouridylase MnmA (358 aa).

Residues 6 to 13 (ALSGGVDS) and M32 contribute to the ATP site. Residue C103 is the Nucleophile of the active site. C103 and C201 are oxidised to a cystine. G127 contacts ATP. The tract at residues 151 to 153 (KDQ) is interaction with tRNA. C201 functions as the Cysteine persulfide intermediate in the catalytic mechanism.

Belongs to the MnmA/TRMU family.

It localises to the cytoplasm. The catalysed reaction is S-sulfanyl-L-cysteinyl-[protein] + uridine(34) in tRNA + AH2 + ATP = 2-thiouridine(34) in tRNA + L-cysteinyl-[protein] + A + AMP + diphosphate + H(+). Its function is as follows. Catalyzes the 2-thiolation of uridine at the wobble position (U34) of tRNA, leading to the formation of s(2)U34. This is tRNA-specific 2-thiouridylase MnmA from Thermotoga maritima (strain ATCC 43589 / DSM 3109 / JCM 10099 / NBRC 100826 / MSB8).